The following is a 372-amino-acid chain: Spermidine/putrescine import ATP-binding protein PotA (372 aa).

The ABC transporter domain maps to 11-241; it reads IELRSIKKSY…PANLFVARFI (231 aa). 43–50 lines the ATP pocket; it reads GPSGCGKT.

Belongs to the ABC transporter superfamily. Spermidine/putrescine importer (TC 3.A.1.11.1) family. In terms of assembly, the complex is composed of two ATP-binding proteins (PotA), two transmembrane proteins (PotB and PotC) and a solute-binding protein (PotD).

It localises to the cell inner membrane. The enzyme catalyses ATP + H2O + polyamine-[polyamine-binding protein]Side 1 = ADP + phosphate + polyamineSide 2 + [polyamine-binding protein]Side 1.. In terms of biological role, part of the ABC transporter complex PotABCD involved in spermidine/putrescine import. Responsible for energy coupling to the transport system. The chain is Spermidine/putrescine import ATP-binding protein PotA from Haemophilus influenzae (strain 86-028NP).